A 141-amino-acid chain; its full sequence is Large ribosomal subunit protein uL11 (141 aa).

Belongs to the universal ribosomal protein uL11 family. As to quaternary structure, part of the ribosomal stalk of the 50S ribosomal subunit. Interacts with L10 and the large rRNA to form the base of the stalk. L10 forms an elongated spine to which L12 dimers bind in a sequential fashion forming a multimeric L10(L12)X complex. One or more lysine residues are methylated.

In terms of biological role, forms part of the ribosomal stalk which helps the ribosome interact with GTP-bound translation factors. This chain is Large ribosomal subunit protein uL11, found in Lactiplantibacillus plantarum (strain ATCC BAA-793 / NCIMB 8826 / WCFS1) (Lactobacillus plantarum).